Consider the following 391-residue polypeptide: Putative alpha-ketoglutarate-dependent sulfonate dioxygenase (391 aa).

2 residues coordinate Fe cation: histidine 204 and aspartate 206. The 2-oxoglutarate site is built by threonine 231 and tryptophan 338. Histidine 353 is a Fe cation binding site. 2-oxoglutarate-binding residues include arginine 364 and arginine 368.

Belongs to the TfdA dioxygenase family. Fe(2+) is required as a cofactor.

It participates in organosulfur degradation; alkanesulfonate degradation. Functionally, acts as an alpha-ketoglutarate-dependent dioxygenase active on sulfonates. This is Putative alpha-ketoglutarate-dependent sulfonate dioxygenase from Schizosaccharomyces pombe (strain 972 / ATCC 24843) (Fission yeast).